Consider the following 176-residue polypeptide: Large ribosomal subunit protein bL28m (176 aa).

The transit peptide at 1–8 directs the protein to the mitochondrion; sequence MASKLLRK.

Belongs to the bacterial ribosomal protein bL28 family. Component of the mitochondrial large ribosomal subunit (mt-LSU). Mature yeast 74S mitochondrial ribosomes consist of a small (37S) and a large (54S) subunit. The 37S small subunit contains a 15S ribosomal RNA (15S mt-rRNA) and at least 32 different proteins. The 54S large subunit contains a 21S rRNA (21S mt-rRNA) and at least 45 different proteins.

The protein localises to the cytoplasm. It is found in the mitochondrion. Component of the mitochondrial ribosome (mitoribosome), a dedicated translation machinery responsible for the synthesis of mitochondrial genome-encoded proteins, including at least some of the essential transmembrane subunits of the mitochondrial respiratory chain. The mitoribosomes are attached to the mitochondrial inner membrane and translation products are cotranslationally integrated into the membrane. This Schizosaccharomyces pombe (strain 972 / ATCC 24843) (Fission yeast) protein is Large ribosomal subunit protein bL28m (mrpl24).